The primary structure comprises 220 residues: Translation initiation factor 6 (220 aa).

Belongs to the eIF-6 family.

Its function is as follows. Binds to the 50S ribosomal subunit and prevents its association with the 30S ribosomal subunit to form the 70S initiation complex. This chain is Translation initiation factor 6, found in Halobacterium salinarum (strain ATCC 29341 / DSM 671 / R1).